Reading from the N-terminus, the 253-residue chain is 3-deoxy-manno-octulosonate cytidylyltransferase (253 aa).

It belongs to the KdsB family.

The protein resides in the cytoplasm. The catalysed reaction is 3-deoxy-alpha-D-manno-oct-2-ulosonate + CTP = CMP-3-deoxy-beta-D-manno-octulosonate + diphosphate. Its pathway is nucleotide-sugar biosynthesis; CMP-3-deoxy-D-manno-octulosonate biosynthesis; CMP-3-deoxy-D-manno-octulosonate from 3-deoxy-D-manno-octulosonate and CTP: step 1/1. The protein operates within bacterial outer membrane biogenesis; lipopolysaccharide biosynthesis. Functionally, activates KDO (a required 8-carbon sugar) for incorporation into bacterial lipopolysaccharide in Gram-negative bacteria. The protein is 3-deoxy-manno-octulosonate cytidylyltransferase of Geotalea daltonii (strain DSM 22248 / JCM 15807 / FRC-32) (Geobacter daltonii).